Reading from the N-terminus, the 290-residue chain is Putative phosphoenolpyruvate synthase regulatory protein (290 aa).

170–177 (GVSRCGKT) lines the ADP pocket.

It belongs to the pyruvate, phosphate/water dikinase regulatory protein family. PSRP subfamily.

The catalysed reaction is [pyruvate, water dikinase] + ADP = [pyruvate, water dikinase]-phosphate + AMP + H(+). The enzyme catalyses [pyruvate, water dikinase]-phosphate + phosphate + H(+) = [pyruvate, water dikinase] + diphosphate. Bifunctional serine/threonine kinase and phosphorylase involved in the regulation of the phosphoenolpyruvate synthase (PEPS) by catalyzing its phosphorylation/dephosphorylation. This Enterobacter agglomerans (Erwinia herbicola) protein is Putative phosphoenolpyruvate synthase regulatory protein (ydiA).